A 500-amino-acid chain; its full sequence is ERAD-associated E3 ubiquitin-protein ligase HRD1 (500 aa).

The Cytoplasmic segment spans residues 1–3 (MIR). Residues 4–24 (LQTYAAFSLMATATAVYYAFS) form a helical membrane-spanning segment. At 25–40 (SREQFYPAMVYLSTSK) the chain is on the lumenal side. Residues 41 to 61 (ICFVLLLNTGLVAMCVAWQLV) traverse the membrane as a helical segment. The Cytoplasmic portion of the chain corresponds to 62-98 (KRLFLGTLREAEVERLNEQAWREVVEILFAVTIFRQD). The helical transmembrane segment at 99–119 (FSVSFLAMVAALLLVKALHWL) threads the bilayer. Topologically, residues 120 to 135 (AQKRVEYIETTPSVPM) are lumenal. A helical membrane pass occupies residues 136-156 (LSHARIVSFMLFLLVVDCLFL). Residues 157 to 170 (SNSLRSLIHKREAS) are Cytoplasmic-facing. A helical transmembrane segment spans residues 171-191 (VAIFFSFEYMILATSTVSTFV). Topologically, residues 192 to 225 (KYIFYVSDMLMEGQWEKKAVYTFYLELISDLVHL) are lumenal. The chain crosses the membrane as a helical span at residues 226-246 (SLYMLFFIAIFLNYGVPLHLI). Residues 247 to 500 (RELYETFRNF…NENGEHTKSD (254 aa)) lie on the Cytoplasmic side of the membrane. An RING-type; atypical zinc finger spans residues 292 to 330 (CIICREEMTTAKKLLCGHLFHVHCLRSWLERQHTCPTCR). Disordered regions lie at residues 337-375 (DNGR…SRRQ) and 398-438 (NNLN…SAPT). Low complexity predominate over residues 348 to 358 (VHPGVQPVPGN). Residues 398 to 426 (NNLNRYSTPPQSTSNGPQSGEASTSNQSP) are compositionally biased toward polar residues.

Belongs to the HRD1 family.

The protein resides in the endoplasmic reticulum membrane. The catalysed reaction is S-ubiquitinyl-[E2 ubiquitin-conjugating enzyme]-L-cysteine + [acceptor protein]-L-lysine = [E2 ubiquitin-conjugating enzyme]-L-cysteine + N(6)-ubiquitinyl-[acceptor protein]-L-lysine.. It functions in the pathway protein modification; protein ubiquitination. Its function is as follows. Probable component of the HRD1 ubiquitin ligase complex that mediates the rapid degradation of misfolded endoplasmic reticulum (ER) proteins, a process called ER-associated degradation (ERAD). The chain is ERAD-associated E3 ubiquitin-protein ligase HRD1 from Oryza sativa subsp. japonica (Rice).